Here is a 43-residue protein sequence, read N- to C-terminus: uncharacterized protein (43 aa).

Residues 1-17 (MYRRLLLNLFCMVFLQA) form the signal peptide.

This is an uncharacterized protein from Helicobacter pylori (strain J99 / ATCC 700824) (Campylobacter pylori J99).